Reading from the N-terminus, the 29-residue chain is NADP phosphatase 1 (29 aa).

In terms of assembly, homodimer.

The protein resides in the cytoplasm. In Arthrobacter sp. (strain KM), this protein is NADP phosphatase 1.